The sequence spans 1049 residues: Toll-like receptor 7 (1049 aa).

An N-terminal signal peptide occupies residues 1 to 26; sequence MVFPMWTLKRQILILFNIILISKLLG. Over 27–839 the chain is Extracellular; sequence ARWFPKTLPC…LYTCELDLTN (813 aa). LRR repeat units follow at residues 43–64, 65–87, 110–126, 127–149, 151–170, and 171–195; these read PKNHVIVDCTDKHLTEIPGGIP, TNTTNLTLTINHIPDISPASFHR, NMCIKRLQIKPRSFSGL, TYLKSLYLDGNQLLEIPQGLPPS, QLLSLEANNIFSIRKENLTE, and LANIEILYLGQNCYYRNPCYVSYSI. N-linked (GlcNAc...) asparagine glycans are attached at residues Asn-66 and Asn-69. Asn-167 carries an N-linked (GlcNAc...) asparagine glycan. N-linked (GlcNAc...) asparagine glycans are attached at residues Asn-202 and Asn-215. 9 LRR repeats span residues 203–226, 228–247, 248–275, 289–312, 314–337, 339–368, 369–392, 396–419, and 421–443; these read LTKLKVLSLKDNNVTAVPTVLPST, TELYLYNNMIAKIQEDDFNN, LNQLQILDLSGNCPRCYNAPFPCAPCKN, LTELKVLRLHSNSLQHVPPRWFKN, NKLQELDLSQNFLAKEIGDAKFLH, LPSLIQLDLSFNFELQVYRASMNLSQAFSS, LKSLKILRIRGYVFKELKSFNLSP, LQNLEVLDLGTNFIKIANLSMFKQ, and KRLKVIDLSVNKISPSGDSSEVG. An N-linked (GlcNAc...) asparagine glycan is attached at Asn-361. N-linked (GlcNAc...) asparagine glycosylation is present at Asn-413. N-linked (GlcNAc...) asparagine glycosylation is present at Asn-488. LRR repeat units follow at residues 492-515, 516-540, 541-564, and 566-588; these read YKYGQTLDLSKNSIFFVKSSDFQH, LSFLKCLNLSGNLISQTLNGSEFQP, LAELRYLDFSNNRLDLLHSTAFEE, and HKLEVLDISSNSHYFQSEGITHM. Asn-523 and Asn-534 each carry an N-linked (GlcNAc...) asparagine glycan. Residue Asn-590 is glycosylated (N-linked (GlcNAc...) asparagine). LRR repeat units lie at residues 595–618, 619–644, 649–672, 674–697, 698–721, 723–745, 746–769, and 772–795; these read LKVLQKLMMNDNDISSSTSRTMES, ESLRTLEFRGNHLDVLWREGDNRYLQ, LLKLEELDISKNSLSFLPSGVFDG, PPNLKNLSLAKNGLKSFSWKKLQC, LKNLETLDLSHNQLTTVPERLSNC, RSLKNLILKNNQIRSLTKYFLQD, AFQLRYLDLSSNKIQMIQKTSFPE, and LNNLKMLLLHHNRFLCTCDAVWFV. Asn-679 and Asn-720 each carry an N-linked (GlcNAc...) asparagine glycan. N-linked (GlcNAc...) asparagine glycosylation occurs at Asn-799. Residues 840 to 860 traverse the membrane as a helical segment; it reads LILFSLSISVSLFLMVMMTAS. Over 861–1049 the chain is Cytoplasmic; that stretch reads HLYFWDVWYI…AYSQVFKETV (189 aa). Residues 889–1033 form the TIR domain; the sequence is CCYDAFIVYD…YFWQCLKNAL (145 aa).

Belongs to the Toll-like receptor family. In terms of assembly, homodimer. Interacts with MYD88 via their respective TIR domains. Interacts with UNC93B1. Interacts with SMPDL3B. Detected in brain, placenta, spleen, stomach, small intestine, lung and in plasmacytoid pre-dendritic cells. Expressed in peripheral mononuclear blood cells.

It localises to the endoplasmic reticulum membrane. It is found in the endosome. The protein resides in the lysosome. Its subcellular location is the cytoplasmic vesicle. The protein localises to the phagosome. Its activity is regulated as follows. Activated by guanosine analogs including deoxyguanosine, 7-thia-8-oxoguanosine or 7-deazaguanosine in a RNA-independent manner. Activated by imiquimod. In terms of biological role, endosomal receptor that plays a key role in innate and adaptive immunity. Controls host immune response against pathogens through recognition of uridine-containing single strand RNAs (ssRNAs) of viral origin or guanosine analogs. Upon binding to agonists, undergoes dimerization that brings TIR domains from the two molecules into direct contact, leading to the recruitment of TIR-containing downstream adapter MYD88 through homotypic interaction. In turn, the Myddosome signaling complex is formed involving IRAK4, IRAK1, TRAF6, TRAF3 leading to activation of downstream transcription factors NF-kappa-B and IRF7 to induce pro-inflammatory cytokines and interferons, respectively. In plasmacytoid dendritic cells, RNASET2 endonuclease cooperates with PLD3 or PLD4 5'-&gt;3' exonucleases to process RNA and release 2',3'-cyclic guanosine monophosphate (2',3'-cGMP) and cytidine-rich RNA fragments that occupy TLR7 ligand-binding pockets and trigger a signaling-competent state. The chain is Toll-like receptor 7 from Homo sapiens (Human).